The following is a 187-amino-acid chain: Segregation and condensation protein B (187 aa).

The protein belongs to the ScpB family. In terms of assembly, homodimer. Homodimerization may be required to stabilize the binding of ScpA to the Smc head domains. Component of a cohesin-like complex composed of ScpA, ScpB and the Smc homodimer, in which ScpA and ScpB bind to the head domain of Smc. The presence of the three proteins is required for the association of the complex with DNA.

Its subcellular location is the cytoplasm. In terms of biological role, participates in chromosomal partition during cell division. May act via the formation of a condensin-like complex containing Smc and ScpA that pull DNA away from mid-cell into both cell halves. The polypeptide is Segregation and condensation protein B (Agathobacter rectalis (strain ATCC 33656 / DSM 3377 / JCM 17463 / KCTC 5835 / VPI 0990) (Eubacterium rectale)).